A 152-amino-acid polypeptide reads, in one-letter code: D-aminoacyl-tRNA deacylase (152 aa).

Residues glycine 137 to proline 138 carry the Gly-cisPro motif, important for rejection of L-amino acids motif.

Belongs to the DTD family. Homodimer.

The protein localises to the cytoplasm. It carries out the reaction glycyl-tRNA(Ala) + H2O = tRNA(Ala) + glycine + H(+). The catalysed reaction is a D-aminoacyl-tRNA + H2O = a tRNA + a D-alpha-amino acid + H(+). Its function is as follows. An aminoacyl-tRNA editing enzyme that deacylates mischarged D-aminoacyl-tRNAs. Also deacylates mischarged glycyl-tRNA(Ala), protecting cells against glycine mischarging by AlaRS. Acts via tRNA-based rather than protein-based catalysis; rejects L-amino acids rather than detecting D-amino acids in the active site. By recycling D-aminoacyl-tRNA to D-amino acids and free tRNA molecules, this enzyme counteracts the toxicity associated with the formation of D-aminoacyl-tRNA entities in vivo and helps enforce protein L-homochirality. In Geobacter sulfurreducens (strain ATCC 51573 / DSM 12127 / PCA), this protein is D-aminoacyl-tRNA deacylase.